The following is a 205-amino-acid chain: MIGKLKGTIDEIGEDFVVLDVHGVGYVAYCSARTLAKLGSAGEAAVLFIETYVREDQLRLFGFLSALEREWFRLLQTVQGVGSKVALALLTTLTPGELANAIALQDKTSVARAPGVGPKVAVRIVTELKNKAPAFAGEMSASIGLKQELGEGVAAAPVSDAVSALTNLGYSRDQAANAVAAALKNGGEGGDSAKLIRLGLKELAR.

The interval 1–64 is domain I; sequence MIGKLKGTID…EDQLRLFGFL (64 aa). Residues 65-143 form a domain II region; that stretch reads SALEREWFRL…AFAGEMSASI (79 aa). The interval 144–153 is flexible linker; it reads GLKQELGEGV. Positions 153-205 are domain III; sequence VAAAPVSDAVSALTNLGYSRDQAANAVAAALKNGGEGGDSAKLIRLGLKELAR.

It belongs to the RuvA family. Homotetramer. Forms an RuvA(8)-RuvB(12)-Holliday junction (HJ) complex. HJ DNA is sandwiched between 2 RuvA tetramers; dsDNA enters through RuvA and exits via RuvB. An RuvB hexamer assembles on each DNA strand where it exits the tetramer. Each RuvB hexamer is contacted by two RuvA subunits (via domain III) on 2 adjacent RuvB subunits; this complex drives branch migration. In the full resolvosome a probable DNA-RuvA(4)-RuvB(12)-RuvC(2) complex forms which resolves the HJ.

The protein localises to the cytoplasm. In terms of biological role, the RuvA-RuvB-RuvC complex processes Holliday junction (HJ) DNA during genetic recombination and DNA repair, while the RuvA-RuvB complex plays an important role in the rescue of blocked DNA replication forks via replication fork reversal (RFR). RuvA specifically binds to HJ cruciform DNA, conferring on it an open structure. The RuvB hexamer acts as an ATP-dependent pump, pulling dsDNA into and through the RuvAB complex. HJ branch migration allows RuvC to scan DNA until it finds its consensus sequence, where it cleaves and resolves the cruciform DNA. The sequence is that of Holliday junction branch migration complex subunit RuvA from Sinorhizobium fredii (strain NBRC 101917 / NGR234).